The chain runs to 130 residues: HTH-type transcriptional repressor YtrA (130 aa).

One can recognise an HTH gntR-type domain in the interval 10–78 (TPIYEQIIQQ…RGRGTYISEN (69 aa)). A DNA-binding region (H-T-H motif) is located at residues 38 to 57 (VRELATIIIANPNTVSKAYK).

Its function is as follows. Negatively regulates ABC transporter complex ytrBCDEF that plays a role in acetoin utilization during stationary phase and sporulation. The protein is HTH-type transcriptional repressor YtrA (ytrA) of Bacillus subtilis (strain 168).